The sequence spans 480 residues: Glycogen synthase (480 aa).

Residue Lys-15 participates in ADP-alpha-D-glucose binding.

It belongs to the glycosyltransferase 1 family. Bacterial/plant glycogen synthase subfamily.

It catalyses the reaction [(1-&gt;4)-alpha-D-glucosyl](n) + ADP-alpha-D-glucose = [(1-&gt;4)-alpha-D-glucosyl](n+1) + ADP + H(+). It participates in glycan biosynthesis; glycogen biosynthesis. Functionally, synthesizes alpha-1,4-glucan chains using ADP-glucose. The protein is Glycogen synthase of Pasteurella multocida (strain Pm70).